The chain runs to 227 residues: Leucyl/phenylalanyl-tRNA--protein transferase (227 aa).

This sequence belongs to the L/F-transferase family.

Its subcellular location is the cytoplasm. It catalyses the reaction N-terminal L-lysyl-[protein] + L-leucyl-tRNA(Leu) = N-terminal L-leucyl-L-lysyl-[protein] + tRNA(Leu) + H(+). It carries out the reaction N-terminal L-arginyl-[protein] + L-leucyl-tRNA(Leu) = N-terminal L-leucyl-L-arginyl-[protein] + tRNA(Leu) + H(+). The enzyme catalyses L-phenylalanyl-tRNA(Phe) + an N-terminal L-alpha-aminoacyl-[protein] = an N-terminal L-phenylalanyl-L-alpha-aminoacyl-[protein] + tRNA(Phe). Functions in the N-end rule pathway of protein degradation where it conjugates Leu, Phe and, less efficiently, Met from aminoacyl-tRNAs to the N-termini of proteins containing an N-terminal arginine or lysine. This is Leucyl/phenylalanyl-tRNA--protein transferase from Afipia carboxidovorans (strain ATCC 49405 / DSM 1227 / KCTC 32145 / OM5) (Oligotropha carboxidovorans).